Reading from the N-terminus, the 683-residue chain is Multidrug resistance protein MdtO (683 aa).

9 consecutive transmembrane segments (helical) span residues 43 to 63 (VILI…AVLF), 75 to 95 (FVAI…FLIY), 100 to 120 (GEPL…MFLM), 125 to 145 (LGLV…FPAM), 158 to 178 (WCIV…VLWF), 402 to 422 (FGGA…VMPW), 426 to 446 (IVEL…IATS), 457 to 477 (MVVT…YDLV), and 483 to 503 (ALGI…VWPE).

Belongs to the MdtO family. As to quaternary structure, could be part of a tripartite efflux system composed of MdtN, MdtO and MdtP.

Its subcellular location is the cell inner membrane. Its function is as follows. Could be involved in resistance to puromycin, acriflavine and tetraphenylarsonium chloride. This chain is Multidrug resistance protein MdtO (mdtO), found in Escherichia coli O6:H1 (strain CFT073 / ATCC 700928 / UPEC).